The chain runs to 423 residues: MAKIVVTGGAALHGEVSISGAKNAVLPILCATLLADEPVEITNVPHLHDVVTTVKLLGELGAKVTIDQGTLSRGSAIVVDPRPVNQHVAPYELVKTMRASILVLGPLLARFGAAEVSLPGGCAIGSRPVDQHIKGLQALGAEIVVENGFIKASAKRLKGGHFTFDMVSVTGTENVLMGAVLAEGTTVLDNCAMEPEVTDLAHCLIALGAKIEGLGTARLVIEGVERLSGGRHEVLPDRIETGTFLVAAAMTGGKVTVNRARPNTMDAVLSKLVEAGAKIETTDDSITLDMQGRRPKAVNLTTAPYPAFPTDMQAQFMALNCVADGVGVINETIFENRFMHVNELLRLGADIQVEGHTAIVRGSEHLSGAPVMATDLRASASLILAGLMASGDTTIDRIYHLDRGYENIEEKLSSLGATIRRVP.

A phosphoenolpyruvate-binding site is contributed by 22–23; sequence KN. Arg98 contributes to the UDP-N-acetyl-alpha-D-glucosamine binding site. Cys122 serves as the catalytic Proton donor. Residue Cys122 is modified to 2-(S-cysteinyl)pyruvic acid O-phosphothioketal. Residues 127–131, Asp311, and Ile333 each bind UDP-N-acetyl-alpha-D-glucosamine; that span reads RPVDQ.

This sequence belongs to the EPSP synthase family. MurA subfamily.

The protein localises to the cytoplasm. It carries out the reaction phosphoenolpyruvate + UDP-N-acetyl-alpha-D-glucosamine = UDP-N-acetyl-3-O-(1-carboxyvinyl)-alpha-D-glucosamine + phosphate. The protein operates within cell wall biogenesis; peptidoglycan biosynthesis. Functionally, cell wall formation. Adds enolpyruvyl to UDP-N-acetylglucosamine. This is UDP-N-acetylglucosamine 1-carboxyvinyltransferase from Stenotrophomonas maltophilia (strain K279a).